Consider the following 296-residue polypeptide: Formamidopyrimidine-DNA glycosylase (296 aa).

Pro2 (schiff-base intermediate with DNA) is an active-site residue. Glu3 serves as the catalytic Proton donor. The active-site Proton donor; for beta-elimination activity is Lys58. His104, Arg126, and Lys169 together coordinate DNA. Residues 260–296 (SVYDRESQACRTPGCGGTVARIVQAGRSTFYCATCQK) form an FPG-type zinc finger. The active-site Proton donor; for delta-elimination activity is Arg286.

The protein belongs to the FPG family. As to quaternary structure, monomer. It depends on Zn(2+) as a cofactor.

It carries out the reaction Hydrolysis of DNA containing ring-opened 7-methylguanine residues, releasing 2,6-diamino-4-hydroxy-5-(N-methyl)formamidopyrimidine.. It catalyses the reaction 2'-deoxyribonucleotide-(2'-deoxyribose 5'-phosphate)-2'-deoxyribonucleotide-DNA = a 3'-end 2'-deoxyribonucleotide-(2,3-dehydro-2,3-deoxyribose 5'-phosphate)-DNA + a 5'-end 5'-phospho-2'-deoxyribonucleoside-DNA + H(+). Involved in base excision repair of DNA damaged by oxidation or by mutagenic agents. Acts as a DNA glycosylase that recognizes and removes damaged bases. Has a preference for oxidized purines, such as 7,8-dihydro-8-oxoguanine (8-oxoG). Has AP (apurinic/apyrimidinic) lyase activity and introduces nicks in the DNA strand. Cleaves the DNA backbone by beta-delta elimination to generate a single-strand break at the site of the removed base with both 3'- and 5'-phosphates. The sequence is that of Formamidopyrimidine-DNA glycosylase from Rhizobium johnstonii (strain DSM 114642 / LMG 32736 / 3841) (Rhizobium leguminosarum bv. viciae).